Here is a 176-residue protein sequence, read N- to C-terminus: Shikimate kinase (176 aa).

14 to 19 (GAGKST) serves as a coordination point for ATP. Residue Ser18 coordinates Mg(2+). Residues Asp36, Arg60, and Gly83 each coordinate substrate. Residue Arg121 participates in ATP binding. Arg140 provides a ligand contact to substrate.

Belongs to the shikimate kinase family. As to quaternary structure, monomer. It depends on Mg(2+) as a cofactor.

Its subcellular location is the cytoplasm. It carries out the reaction shikimate + ATP = 3-phosphoshikimate + ADP + H(+). Its pathway is metabolic intermediate biosynthesis; chorismate biosynthesis; chorismate from D-erythrose 4-phosphate and phosphoenolpyruvate: step 5/7. Its function is as follows. Catalyzes the specific phosphorylation of the 3-hydroxyl group of shikimic acid using ATP as a cosubstrate. This chain is Shikimate kinase, found in Francisella tularensis subsp. holarctica (strain FTNF002-00 / FTA).